Consider the following 286-residue polypeptide: Shikimate dehydrogenase (NADP(+)) (286 aa).

Residues S20 to S22 and T67 each bind shikimate. K71 serves as the catalytic Proton acceptor. Shikimate-binding residues include N92 and D107. NADP(+) is bound by residues G132 to A136 and M228. Y230 serves as a coordination point for shikimate. Position 251 (G251) interacts with NADP(+).

This sequence belongs to the shikimate dehydrogenase family. As to quaternary structure, homodimer.

The catalysed reaction is shikimate + NADP(+) = 3-dehydroshikimate + NADPH + H(+). The protein operates within metabolic intermediate biosynthesis; chorismate biosynthesis; chorismate from D-erythrose 4-phosphate and phosphoenolpyruvate: step 4/7. Involved in the biosynthesis of the chorismate, which leads to the biosynthesis of aromatic amino acids. Catalyzes the reversible NADPH linked reduction of 3-dehydroshikimate (DHSA) to yield shikimate (SA). The protein is Shikimate dehydrogenase (NADP(+)) of Geobacter sulfurreducens (strain ATCC 51573 / DSM 12127 / PCA).